The primary structure comprises 248 residues: MILLISDLHLEEERPDITRAFLDLLAGRARSASALYILGDFFEAWIGDDAMTPFQRSICQALRELSDSGTAIFLMHGNRDFMLGKAFCKQAGCTLLKDPSVVQFYGEPVLLMHGDSLCTRDESYMKLRRYLRNPLSLFILRNLPLRTRHKLARKLRSESRAQTRMKANDIVDVTPEEIPRIMQEYGVKTLVHGHTHRPAIHKLQIGDQAAKRIVLGDWDRQGWALQVDENGFALAPFDFAPPLALPHG.

Aspartate 7, histidine 9, aspartate 40, asparagine 78, and histidine 113 together coordinate Mn(2+). 78 to 79 (NR) lines the substrate pocket. Substrate contacts are provided by aspartate 121, serine 159, threonine 163, lysine 166, and histidine 194. Positions 194 and 196 each coordinate Mn(2+).

This sequence belongs to the LpxH family. It depends on Mn(2+) as a cofactor.

Its subcellular location is the cell inner membrane. It catalyses the reaction UDP-2-N,3-O-bis[(3R)-3-hydroxytetradecanoyl]-alpha-D-glucosamine + H2O = 2-N,3-O-bis[(3R)-3-hydroxytetradecanoyl]-alpha-D-glucosaminyl 1-phosphate + UMP + 2 H(+). Its pathway is glycolipid biosynthesis; lipid IV(A) biosynthesis; lipid IV(A) from (3R)-3-hydroxytetradecanoyl-[acyl-carrier-protein] and UDP-N-acetyl-alpha-D-glucosamine: step 4/6. Functionally, hydrolyzes the pyrophosphate bond of UDP-2,3-diacylglucosamine to yield 2,3-diacylglucosamine 1-phosphate (lipid X) and UMP by catalyzing the attack of water at the alpha-P atom. Involved in the biosynthesis of lipid A, a phosphorylated glycolipid that anchors the lipopolysaccharide to the outer membrane of the cell. The protein is UDP-2,3-diacylglucosamine hydrolase of Pseudomonas fluorescens (strain Pf0-1).